Here is a 189-residue protein sequence, read N- to C-terminus: Notch ligand osm-11 (189 aa).

A signal peptide spans 1–18 (MNFITVAALAIVMVLAQA).

May interact with lin-12/Notch receptor. As to expression, expressed in coelomocytes (at protein level).

The protein localises to the apical cell membrane. Probable secreted lin-12/Notch ligand or co-ligand involved in the mediation of Notch signaling. Involved in the lin-12/Notch pathway signaling of cell fate in vulval precursor cells (VPCs), acting redundantly with dsl-1 and lag-2. Required for normal octanol avoidance response, acting via both lin-12/Notch and glp-1/Notch signaling pathways in neurons, in concert with lag-2. Involved in regulation of sleep-like quiescence during the larval to adult transition, acting via Notch receptor activation and in parallel with EGF signaling. The sequence is that of Notch ligand osm-11 from Caenorhabditis elegans.